We begin with the raw amino-acid sequence, 407 residues long: Tryptophan synthase beta chain (407 aa).

N6-(pyridoxal phosphate)lysine is present on K98.

It belongs to the TrpB family. As to quaternary structure, tetramer of two alpha and two beta chains. Pyridoxal 5'-phosphate serves as cofactor.

The catalysed reaction is (1S,2R)-1-C-(indol-3-yl)glycerol 3-phosphate + L-serine = D-glyceraldehyde 3-phosphate + L-tryptophan + H2O. The protein operates within amino-acid biosynthesis; L-tryptophan biosynthesis; L-tryptophan from chorismate: step 5/5. Functionally, the beta subunit is responsible for the synthesis of L-tryptophan from indole and L-serine. This chain is Tryptophan synthase beta chain, found in Bradyrhizobium sp. (strain BTAi1 / ATCC BAA-1182).